The following is a 56-amino-acid chain: UPF0434 protein CbuG_1535 (56 aa).

The protein belongs to the UPF0434 family.

This is UPF0434 protein CbuG_1535 from Coxiella burnetii (strain CbuG_Q212) (Coxiella burnetii (strain Q212)).